A 194-amino-acid chain; its full sequence is Ribosome maturation factor RimP (194 aa).

This sequence belongs to the RimP family.

It localises to the cytoplasm. Its function is as follows. Required for maturation of 30S ribosomal subunits. The polypeptide is Ribosome maturation factor RimP (Jannaschia sp. (strain CCS1)).